Reading from the N-terminus, the 107-residue chain is Nucleoid-associated protein Lferr_1592 (107 aa).

Belongs to the YbaB/EbfC family. Homodimer.

It is found in the cytoplasm. The protein resides in the nucleoid. Functionally, binds to DNA and alters its conformation. May be involved in regulation of gene expression, nucleoid organization and DNA protection. The sequence is that of Nucleoid-associated protein Lferr_1592 from Acidithiobacillus ferrooxidans (strain ATCC 53993 / BNL-5-31) (Leptospirillum ferrooxidans (ATCC 53993)).